The primary structure comprises 759 residues: 5-methyltetrahydropteroyltriglutamate--homocysteine methyltransferase (759 aa).

The segment covering 1–16 (MTQPVRRQPFTATITG) has biased composition (polar residues). The disordered stretch occupies residues 1–22 (MTQPVRRQPFTATITGSPRIGP). Residues 24–27 (RELK) and Lys-118 each bind 5-methyltetrahydropteroyltri-L-glutamate. L-homocysteine is bound by residues 437-439 (IGS) and Glu-490. L-methionine contacts are provided by residues 437 to 439 (IGS) and Glu-490. 5-methyltetrahydropteroyltri-L-glutamate is bound by residues 521–522 (RC) and Trp-567. Residue Asp-605 participates in L-homocysteine binding. An L-methionine-binding site is contributed by Asp-605. Glu-611 lines the 5-methyltetrahydropteroyltri-L-glutamate pocket. Residues His-647, Cys-649, and Glu-671 each contribute to the Zn(2+) site. The Proton donor role is filled by His-700. Position 732 (Cys-732) interacts with Zn(2+).

The protein belongs to the vitamin-B12 independent methionine synthase family. Zn(2+) is required as a cofactor.

The catalysed reaction is 5-methyltetrahydropteroyltri-L-glutamate + L-homocysteine = tetrahydropteroyltri-L-glutamate + L-methionine. It participates in amino-acid biosynthesis; L-methionine biosynthesis via de novo pathway; L-methionine from L-homocysteine (MetE route): step 1/1. In terms of biological role, catalyzes the transfer of a methyl group from 5-methyltetrahydrofolate to homocysteine resulting in methionine formation. This chain is 5-methyltetrahydropteroyltriglutamate--homocysteine methyltransferase, found in Mycobacterium tuberculosis (strain ATCC 25177 / H37Ra).